We begin with the raw amino-acid sequence, 820 residues long: TORTIFOLIA1-like protein 2 (820 aa).

HEAT repeat units lie at residues 61-98, 102-139, 146-183, 187-224, and 228-265; these read DKVS…FHEG, PYLG…KMSC, GVFV…SSPE, AIIQ…AGGA, and SVLS…TGEK. Positions 304-321 are enriched in low complexity; sequence PGSDSPEPSETESSVKES. Disordered regions lie at residues 304–325, 357–377, and 584–644; these read PGSD…YNGA, PVSA…SNQD, and GSTI…GKTG. Residues 367-377 show a composition bias toward basic and acidic residues; sequence YNDDPRKSNQD. Residues 584–613 are compositionally biased toward polar residues; that stretch reads GSTISPRLSSCTSRTSTDIRNRQSTLSTSK.

This chain is TORTIFOLIA1-like protein 2, found in Arabidopsis thaliana (Mouse-ear cress).